Here is a 296-residue protein sequence, read N- to C-terminus: Nitrogenase iron protein 2 (296 aa).

Position 11–18 (11–18 (GKGGIGKS)) interacts with ATP. Cys-99 is a [4Fe-4S] cluster binding site. Residue Arg-102 is modified to ADP-ribosylarginine; by dinitrogenase reductase ADP-ribosyltransferase. Cys-133 contacts [4Fe-4S] cluster.

This sequence belongs to the NifH/BchL/ChlL family. Homodimer. [4Fe-4S] cluster serves as cofactor. Post-translationally, the reversible ADP-ribosylation of Arg-102 inactivates the nitrogenase reductase and regulates nitrogenase activity.

The catalysed reaction is N2 + 8 reduced [2Fe-2S]-[ferredoxin] + 16 ATP + 16 H2O = H2 + 8 oxidized [2Fe-2S]-[ferredoxin] + 2 NH4(+) + 16 ADP + 16 phosphate + 6 H(+). The key enzymatic reactions in nitrogen fixation are catalyzed by the nitrogenase complex, which has 2 components: the iron protein and the molybdenum-iron protein. This is Nitrogenase iron protein 2 (nifH2) from Azorhizobium caulinodans (strain ATCC 43989 / DSM 5975 / JCM 20966 / LMG 6465 / NBRC 14845 / NCIMB 13405 / ORS 571).